The chain runs to 292 residues: Transcription factor HFR1 (292 aa).

A disordered region spans residues 114 to 153 (KRRIQVLSSDDESEEFTREVPSVTRKGSKRRRRDEKMSNK). The interval 134–147 (PSVTRKGSKRRRRD) is basic motif; degenerate. The bHLH domain occupies 134 to 183 (PSVTRKGSKRRRRDEKMSNKMRKLQQLVPNCHKTDKVSVLDKTIEYMKNL). Residues 139–153 (KGSKRRRRDEKMSNK) show a composition bias toward basic residues. The short motif at 141 to 148 (SKRRRRDE) is the Nuclear localization signal element. The helix-loop-helix motif stretch occupies residues 148–183 (EKMSNKMRKLQQLVPNCHKTDKVSVLDKTIEYMKNL).

In terms of assembly, binds to FHY1 and FHL. Forms PHYA/FHY1/HFR1 complex. Homodimer and heterodimer with PIF3. Do not interact alone with either phytochrome A (phyA) or B (phyB), but REP1/PIF3 complex binds to phyA and phyB, preferentially to the Pfr forms. Forms non-functional heterodimer with PRE6, causing liberation of PIF4 from the transcriptionally inactive complex HFR1-PIF4. Repressed when bound to PRE1, PRE2 and PRE4. Mainly expressed in fruits and flowers and, to a lower extent, in leaves, stems, seedlings and roots.

Its subcellular location is the nucleus. Its function is as follows. Atypical bHLH transcription factor that regulates photomorphogenesis through modulation of phytochrome (e.g. PHYA) and cryptochrome signalings. Suppresses the transcriptional regulation activity of PIF4 by forming non-DNA-binding heterodimer. This is Transcription factor HFR1 from Arabidopsis thaliana (Mouse-ear cress).